The chain runs to 122 residues: MIQTESRLEVADNTGAREVMCIKVLGGSKRRYAGIGDVIKVTVKVAAPRGRVKKGEIYNAVVVRTAKGVRRQDGSLVKFDGNAAVLLNAKLEPIGTRIFGPVTRELRTERFMKIVSLAPEVL.

This sequence belongs to the universal ribosomal protein uL14 family. In terms of assembly, part of the 50S ribosomal subunit. Forms a cluster with proteins L3 and L19. In the 70S ribosome, L14 and L19 interact and together make contacts with the 16S rRNA in bridges B5 and B8.

In terms of biological role, binds to 23S rRNA. Forms part of two intersubunit bridges in the 70S ribosome. This is Large ribosomal subunit protein uL14 from Janthinobacterium sp. (strain Marseille) (Minibacterium massiliensis).